We begin with the raw amino-acid sequence, 310 residues long: Phytoene synthase 2, chloroplastic (310 aa).

Residues 1–25 (DPDIVLPGNLGLLSEAYDRCGEVCA) constitute a chloroplast transit peptide.

The protein belongs to the phytoene/squalene synthase family. In terms of assembly, monomer.

It localises to the plastid. Its subcellular location is the chloroplast. It catalyses the reaction 2 (2E,6E,10E)-geranylgeranyl diphosphate = 15-cis-phytoene + 2 diphosphate. It participates in carotenoid biosynthesis; phytoene biosynthesis; all-trans-phytoene from geranylgeranyl diphosphate: step 1/1. Its function is as follows. Catalyzes the reaction from prephytoene diphosphate to phytoene. This chain is Phytoene synthase 2, chloroplastic (PSY2), found in Solanum lycopersicum (Tomato).